The primary structure comprises 371 residues: Glutamate 5-kinase (371 aa).

Lys-11 contacts ATP. Residues Ser-52, Asp-139, and Asn-151 each contribute to the substrate site. ATP-binding positions include 171 to 172 (TD) and 213 to 219 (TGGMATK). The region spanning 278 to 356 (EGSLTLDEGA…AEIPRILGYE (79 aa)) is the PUA domain.

The protein belongs to the glutamate 5-kinase family.

It localises to the cytoplasm. It catalyses the reaction L-glutamate + ATP = L-glutamyl 5-phosphate + ADP. It participates in amino-acid biosynthesis; L-proline biosynthesis; L-glutamate 5-semialdehyde from L-glutamate: step 1/2. Catalyzes the transfer of a phosphate group to glutamate to form L-glutamate 5-phosphate. This chain is Glutamate 5-kinase, found in Synechococcus sp. (strain JA-2-3B'a(2-13)) (Cyanobacteria bacterium Yellowstone B-Prime).